A 311-amino-acid polypeptide reads, in one-letter code: MALPIIIDCDPGHDDAIALVLALASPELEVKAITSSAGNQTPEKTLRNVLRMLTLLKRPDIPVAGGAVKPLMRELIIADNVHGESGLDGPALPEPSFAPQSGTAVELMAKTLRESSQPVTIVSTGPQTNVALLLNSHPELHAKIARIVIMGGAMGLGNWTPAAEFNIYVDPEAAEIVFQSGIPVVMAGLDVTHKAQIHAADIERFRAIGNPISTIVAELLDFFMEYHKDEKWGFVGAPLHDPCTIAWLLKPEIFTTVERWVGVETQGKYTQGMTVVDYYFLTGNKPNATVMVDVDRQGFVDLLAERLQYYA.

The active site involves His-240.

It belongs to the IUNH family. RihA subfamily.

Hydrolyzes cytidine or uridine to ribose and cytosine or uracil, respectively. This is Pyrimidine-specific ribonucleoside hydrolase RihA from Salmonella agona (strain SL483).